A 404-amino-acid chain; its full sequence is Acetylornithine aminotransferase (404 aa).

Pyridoxal 5'-phosphate contacts are provided by residues 113–114 (GT) and Phe139. Arg142 contacts N(2)-acetyl-L-ornithine. Residue 224–227 (DEVQ) coordinates pyridoxal 5'-phosphate. At Lys253 the chain carries N6-(pyridoxal phosphate)lysine. Ser281 contacts N(2)-acetyl-L-ornithine. Position 282 (Thr282) interacts with pyridoxal 5'-phosphate.

Belongs to the class-III pyridoxal-phosphate-dependent aminotransferase family. ArgD subfamily. As to quaternary structure, homodimer. Pyridoxal 5'-phosphate serves as cofactor.

Its subcellular location is the cytoplasm. The catalysed reaction is N(2)-acetyl-L-ornithine + 2-oxoglutarate = N-acetyl-L-glutamate 5-semialdehyde + L-glutamate. It functions in the pathway amino-acid biosynthesis; L-arginine biosynthesis; N(2)-acetyl-L-ornithine from L-glutamate: step 4/4. The chain is Acetylornithine aminotransferase from Mycobacterium leprae (strain TN).